The chain runs to 393 residues: Eukaryotic translation initiation factor 5 (393 aa).

G28–T35 provides a ligand contact to GTP. Disordered regions lie at residues K144 to D179 and E217 to S247. The 163-residue stretch at E223–E385 folds into the W2 domain. Positions E224 to E233 are enriched in acidic residues.

The protein belongs to the eIF-2-beta/eIF-5 family.

Its function is as follows. Catalyzes the hydrolysis of GTP bound to the 40S ribosomal initiation complex (40S.mRNA.Met-tRNA[F].eIF-2.GTP) with the subsequent joining of a 60S ribosomal subunit resulting in the release of eIF-2 and the guanine nucleotide. The subsequent joining of a 60S ribosomal subunit results in the formation of a functional 80S initiation complex (80S.mRNA.Met-tRNA[F]). The chain is Eukaryotic translation initiation factor 5 (eif5) from Dictyostelium discoideum (Social amoeba).